Reading from the N-terminus, the 208-residue chain is Large ribosomal subunit protein uL3c (208 aa).

Residues threonine 129–leucine 165 are disordered.

The protein belongs to the universal ribosomal protein uL3 family. In terms of assembly, part of the 50S ribosomal subunit.

It is found in the plastid. The protein localises to the chloroplast. One of the primary rRNA binding proteins, it binds directly near the 3'-end of the 23S rRNA, where it nucleates assembly of the 50S subunit. The polypeptide is Large ribosomal subunit protein uL3c (rpl3) (Rhodomonas salina (Cryptomonas salina)).